The primary structure comprises 203 residues: ATP-dependent Clp protease proteolytic subunit 1 (203 aa).

The Nucleophile role is filled by Ser-101. His-126 is an active-site residue.

Belongs to the peptidase S14 family. As to quaternary structure, fourteen ClpP subunits assemble into 2 heptameric rings which stack back to back to give a disk-like structure with a central cavity, resembling the structure of eukaryotic proteasomes.

The protein localises to the cytoplasm. The enzyme catalyses Hydrolysis of proteins to small peptides in the presence of ATP and magnesium. alpha-casein is the usual test substrate. In the absence of ATP, only oligopeptides shorter than five residues are hydrolyzed (such as succinyl-Leu-Tyr-|-NHMec, and Leu-Tyr-Leu-|-Tyr-Trp, in which cleavage of the -Tyr-|-Leu- and -Tyr-|-Trp bonds also occurs).. Cleaves peptides in various proteins in a process that requires ATP hydrolysis. Has a chymotrypsin-like activity. Plays a major role in the degradation of misfolded proteins. This Synechococcus sp. (strain JA-3-3Ab) (Cyanobacteria bacterium Yellowstone A-Prime) protein is ATP-dependent Clp protease proteolytic subunit 1.